The primary structure comprises 317 residues: Melanocyte-stimulating hormone receptor (317 aa).

At 1-37 (MPVQGSQRRLLGSLNSTPTATPHLGLAANQTGARCLE) the chain is on the extracellular side. A glycan (N-linked (GlcNAc...) asparagine) is linked at Asn29. A helical membrane pass occupies residues 38–63 (VSIPDGLFLSLGLVSLVENVLVVTAI). Topologically, residues 64 to 72 (AKNRNLHSP) are cytoplasmic. Residues 73–93 (MYCFICCLALSDLLVSGSNML) form a helical membrane-spanning segment. Residues 94–118 (ETAVILLLEAGALAARAAVVQQLDN) lie on the Extracellular side of the membrane. The chain crosses the membrane as a helical span at residues 119–140 (VIDVITCSSMLSSLCFLGAIAV). Residues 141 to 163 (DRYISIFYALRYHSIVTLPRARR) lie on the Cytoplasmic side of the membrane. Residues 164–183 (AVAAIWVASVLFSMLFIAYY) form a helical membrane-spanning segment. Topologically, residues 184–191 (DHAAVLLC) are extracellular. Residues 192 to 211 (LVVFFLAMLVLMAVLYVHML) form a helical membrane-spanning segment. Topologically, residues 212 to 240 (ARACQHAQGIARLHKRQCPAHQGFGLKGA) are cytoplasmic. Residues 241-266 (ATLTILLGIFFLCWGPFFLHLTLIVL) form a helical membrane-spanning segment. At 267 to 279 (CPQHPTCSCIFKN) the chain is on the extracellular side. Residues 280–300 (FNLFLALIICNAIIDPLIYAF) form a helical membrane-spanning segment. The Cytoplasmic portion of the chain corresponds to 301–317 (RSQELRRTLKEVLLCSW). Cys315 is lipidated: S-palmitoyl cysteine.

The protein belongs to the G-protein coupled receptor 1 family. Interacts with MGRN1, but does not undergo MGRN1-mediated ubiquitination; this interaction competes with GNAS-binding and thus inhibits agonist-induced cAMP production. Interacts with OPN3; the interaction results in a decrease in MC1R-mediated cAMP signaling and ultimately a decrease in melanin production in melanocytes.

It localises to the cell membrane. Functionally, receptor for MSH (alpha, beta and gamma) and ACTH. The activity of this receptor is mediated by G proteins which activate adenylate cyclase. Mediates melanogenesis, the production of eumelanin (black/brown) and phaeomelanin (red/yellow), via regulation of cAMP signaling in melanocytes. The polypeptide is Melanocyte-stimulating hormone receptor (MC1R) (Chlorocebus aethiops (Green monkey)).